The sequence spans 1226 residues: E3 ubiquitin-protein ligase mind-bomb (1226 aa).

Positions 1–12 (MSCAATLSSAKD) are enriched in polar residues. Disordered stretches follow at residues 1 to 42 (MSCA…NTNT) and 66 to 87 (GGGG…AGGV). Over residues 19-30 (SGGGGGGGGGGA) the composition is skewed to gly residues. Low complexity-rich tracts occupy residues 31–42 (PTNSNTNTNTNT) and 73–86 (GGTT…AAGG). Residues 100–168 (VRRFSMEGVG…AYDLRILDSA (69 aa)) form the MIB/HERC2 1 domain. The segment at 174 to 226 (HEGTMCDTCRQQPIFGIRWKCAECINYDLCSICYHGDKHHLRHRFYRITTPGG) adopts a ZZ-type zinc-finger fold. 8 residues coordinate Zn(2+): cysteine 179, cysteine 182, cysteine 194, cysteine 197, cysteine 203, cysteine 206, histidine 212, and histidine 216. Residues 237-315 (SKKVLARGIF…MADLKVVNDA (79 aa)) enclose the MIB/HERC2 2 domain. ANK repeat units lie at residues 567 to 596 (AGHT…DVEI), 600 to 629 (DGDR…DLNA), 633 to 662 (RRQT…HPSL), 666 to 695 (EGDT…DITL), 699 to 731 (NGFN…IVEE), 735 to 765 (DGYT…NMDR), 769 to 798 (NLQT…DLNI), and 802 to 833 (DGDT…KLLM). The segment at 890–919 (TDDSELPGNVAGTSSSARARAASGSLNQSS) is disordered. A compositionally biased stretch (low complexity) spans 900 to 914 (AGTSSSARARAASGS). 2 consecutive RING-type zinc fingers follow at residues 970–1005 (CLVC…LICR) and 1017–1052 (CLVC…VLCR). The stretch at 1159–1181 (VNNFQMDDVQKLKQQLQDIKEQT) forms a coiled coil. The RING-type 3 zinc-finger motif lies at 1183–1216 (CPVCFDRIKNMVFLCGHGTCQMCGDQIEGCPICR).

Interacts with intracellular domain of Dl and Ser. In terms of tissue distribution, ubiquitous in the wing imaginal disk (at protein level).

It localises to the cytoplasm. The protein resides in the cell cortex. It catalyses the reaction S-ubiquitinyl-[E2 ubiquitin-conjugating enzyme]-L-cysteine + [acceptor protein]-L-lysine = [E2 ubiquitin-conjugating enzyme]-L-cysteine + N(6)-ubiquitinyl-[acceptor protein]-L-lysine.. It functions in the pathway protein modification; protein ubiquitination. In terms of biological role, E3 ubiquitin-protein ligase that mediates ubiquitination of Delta (Dl) and Serrate (Ser) receptors, which act as ligands of Notch proteins. Positively regulates the Notch signaling by ubiquitinating the intracellular domain of Dl and Ser, leading to endocytosis of Dl and Ser receptors. Regulates a subset of Notch signaling events, including wing margin specification, leg segmentation and vein determination, that are distinct from those events requiring neuralize (neur) activity. Also modulates lateral inhibition, a neur- and Dl-dependent signaling event, suggesting a distinct but partially complementary function with neur. In Drosophila melanogaster (Fruit fly), this protein is E3 ubiquitin-protein ligase mind-bomb (mib1).